The chain runs to 180 residues: Peptide deformylase (180 aa).

2 residues coordinate Fe cation: Cys96 and His138. Glu139 is a catalytic residue. His142 contacts Fe cation.

The protein belongs to the polypeptide deformylase family. Fe(2+) serves as cofactor.

The enzyme catalyses N-terminal N-formyl-L-methionyl-[peptide] + H2O = N-terminal L-methionyl-[peptide] + formate. In terms of biological role, removes the formyl group from the N-terminal Met of newly synthesized proteins. Requires at least a dipeptide for an efficient rate of reaction. N-terminal L-methionine is a prerequisite for activity but the enzyme has broad specificity at other positions. In Rhodopseudomonas palustris (strain BisA53), this protein is Peptide deformylase.